Here is a 278-residue protein sequence, read N- to C-terminus: MNNILSEEVLNVTDFTTSRQLTLWKREDLQSSQLDDVAEEVPVALVYNGISHVVMMASPKDLTHFAMGFSLSEGIIDSPREIYGMDVVPSCNGLEVQIDLSSRRFMGLKARRRALAGRTGCGVCGVEQLNDIGKPVQPLPFSQTFNLGNLDRALKHLNDFQPTSKLTGCTHAAAWVMPSGELAGGHEDVGRHVALDKLLGRRAMEGEEWRQGAALVSSRASYEMVQKSAMCGVEILFAVSAATTLAVEVAERCNLTLVGFCKPGRATIYTHPQRLIAD.

The active-site Cysteine persulfide intermediate is Cys121. Position 260–265 (260–265 (FCKPGR)) interacts with Mo-bis(molybdopterin guanine dinucleotide).

The protein belongs to the FdhD family.

The protein localises to the cytoplasm. Required for formate dehydrogenase (FDH) activity. Acts as a sulfur carrier protein that transfers sulfur from IscS to the molybdenum cofactor prior to its insertion into FDH. The sequence is that of Sulfur carrier protein FdhD from Salmonella paratyphi A (strain ATCC 9150 / SARB42).